The following is a 418-amino-acid chain: ORC1-type DNA replication protein 2 (418 aa).

ATP is bound by residues 72–76, Tyr-218, and Arg-230; that span reads TGKTV.

The protein belongs to the CDC6/cdc18 family.

Its function is as follows. Involved in regulation of DNA replication. The protein is ORC1-type DNA replication protein 2 (cdc6-2) of Sulfurisphaera tokodaii (strain DSM 16993 / JCM 10545 / NBRC 100140 / 7) (Sulfolobus tokodaii).